A 136-amino-acid polypeptide reads, in one-letter code: uncharacterized protein (136 aa).

A helical membrane pass occupies residues 40 to 62 (LFYSISLCVSLLLHISLCVSVYV).

It is found in the membrane. This is an uncharacterized protein from Homo sapiens (Human).